The chain runs to 185 residues: Ribosome-recycling factor (185 aa).

Positions 142 to 161 (LVKDGEAGEDEGARAEKELD) are disordered.

This sequence belongs to the RRF family.

The protein resides in the cytoplasm. Responsible for the release of ribosomes from messenger RNA at the termination of protein biosynthesis. May increase the efficiency of translation by recycling ribosomes from one round of translation to another. This is Ribosome-recycling factor from Paenarthrobacter aurescens (strain TC1).